The primary structure comprises 236 residues: Protein-L-isoaspartate O-methyltransferase 1 (236 aa).

S86 is a catalytic residue.

Belongs to the methyltransferase superfamily. L-isoaspartyl/D-aspartyl protein methyltransferase family.

It localises to the cytoplasm. The catalysed reaction is [protein]-L-isoaspartate + S-adenosyl-L-methionine = [protein]-L-isoaspartate alpha-methyl ester + S-adenosyl-L-homocysteine. In terms of biological role, catalyzes the methyl esterification of L-isoaspartyl residues in peptides and proteins that result from spontaneous decomposition of normal L-aspartyl and L-asparaginyl residues. It plays a role in the repair and/or degradation of damaged proteins. This is Protein-L-isoaspartate O-methyltransferase 1 from Nitrosospira multiformis (strain ATCC 25196 / NCIMB 11849 / C 71).